We begin with the raw amino-acid sequence, 161 residues long: Nucleotide-binding protein lpg1167 (161 aa).

This sequence belongs to the YajQ family.

In terms of biological role, nucleotide-binding protein. In Legionella pneumophila subsp. pneumophila (strain Philadelphia 1 / ATCC 33152 / DSM 7513), this protein is Nucleotide-binding protein lpg1167.